Consider the following 445-residue polypeptide: C-terminal-binding protein 2 (445 aa).

Position 22 is an asymmetric dimethylarginine (Arg22). NAD(+) is bound by residues Ser106, 186–191 (IGFGRT), Asp210, 243–249 (CNLNEHN), 270–272 (AAR), and Asp296. Arg272 is a catalytic residue. The active site involves Glu301. His321 acts as the Proton donor in catalysis. 321–324 (HTAW) serves as a coordination point for NAD(+). Residues 414–445 (THNLPTVAHPSQAPSPNQPTKHGDNREHPNEQ) are disordered. A Phosphoserine; by HIPK2 modification is found at Ser428. Over residues 434 to 445 (KHGDNREHPNEQ) the composition is skewed to basic and acidic residues.

The protein belongs to the D-isomer specific 2-hydroxyacid dehydrogenase family. As to quaternary structure, interacts with HIPK2, ZNF217 and PNN. Interacts with the transcription factors BKLF, delta EF1/AREB6/ZEB, EVI-1 and Friend of GATA (FOG) via the consensus motif P-X-[DNS]-L-[STVA]. Can form a complex with BKLF on a CACCC-box oligonucleotide. Can form homodimers or heterodimers of CTBP1 and CTBP2. Interacts with NRIP1 and WIZ. Interacts with PRDM16; represses white adipose tissue (WAT)-specific genes expression. Interacts with MCRIP1. In terms of processing, phosphorylation by HIPK2 on Ser-428 induces proteasomal degradation. As to expression, isoform 2 is specifically localized in synaptic ribbon (at protein level).

The protein localises to the nucleus. It localises to the synapse. Its function is as follows. Corepressor targeting diverse transcription regulators. Functions in brown adipose tissue (BAT) differentiation. Isoform 2 probably acts as a scaffold for specialized synapses. This Rattus norvegicus (Rat) protein is C-terminal-binding protein 2 (Ctbp2).